A 182-amino-acid chain; its full sequence is Ribosome maturation factor RimM (182 aa).

The region spanning 103–182 (EGDYYWKDLM…TIEVDWDPGF (80 aa)) is the PRC barrel domain.

The protein belongs to the RimM family. Binds ribosomal protein uS19.

The protein localises to the cytoplasm. In terms of biological role, an accessory protein needed during the final step in the assembly of 30S ribosomal subunit, possibly for assembly of the head region. Essential for efficient processing of 16S rRNA. May be needed both before and after RbfA during the maturation of 16S rRNA. It has affinity for free ribosomal 30S subunits but not for 70S ribosomes. The sequence is that of Ribosome maturation factor RimM from Klebsiella pneumoniae subsp. pneumoniae (strain ATCC 700721 / MGH 78578).